The sequence spans 318 residues: 4-hydroxy-3-methylbut-2-enyl diphosphate reductase (318 aa).

A [4Fe-4S] cluster-binding site is contributed by cysteine 12. The (2E)-4-hydroxy-3-methylbut-2-enyl diphosphate site is built by histidine 41 and histidine 74. Residues histidine 41 and histidine 74 each coordinate dimethylallyl diphosphate. Isopentenyl diphosphate is bound by residues histidine 41 and histidine 74. Cysteine 96 is a binding site for [4Fe-4S] cluster. Residue histidine 124 coordinates (2E)-4-hydroxy-3-methylbut-2-enyl diphosphate. Residue histidine 124 participates in dimethylallyl diphosphate binding. Histidine 124 is an isopentenyl diphosphate binding site. Glutamate 126 serves as the catalytic Proton donor. Threonine 167 is a binding site for (2E)-4-hydroxy-3-methylbut-2-enyl diphosphate. Cysteine 197 contributes to the [4Fe-4S] cluster binding site. Residues serine 225, serine 226, asparagine 227, and serine 269 each contribute to the (2E)-4-hydroxy-3-methylbut-2-enyl diphosphate site. Dimethylallyl diphosphate-binding residues include serine 225, serine 226, asparagine 227, and serine 269. Serine 225, serine 226, asparagine 227, and serine 269 together coordinate isopentenyl diphosphate.

Belongs to the IspH family. The cofactor is [4Fe-4S] cluster.

The catalysed reaction is isopentenyl diphosphate + 2 oxidized [2Fe-2S]-[ferredoxin] + H2O = (2E)-4-hydroxy-3-methylbut-2-enyl diphosphate + 2 reduced [2Fe-2S]-[ferredoxin] + 2 H(+). It carries out the reaction dimethylallyl diphosphate + 2 oxidized [2Fe-2S]-[ferredoxin] + H2O = (2E)-4-hydroxy-3-methylbut-2-enyl diphosphate + 2 reduced [2Fe-2S]-[ferredoxin] + 2 H(+). It participates in isoprenoid biosynthesis; dimethylallyl diphosphate biosynthesis; dimethylallyl diphosphate from (2E)-4-hydroxy-3-methylbutenyl diphosphate: step 1/1. Its pathway is isoprenoid biosynthesis; isopentenyl diphosphate biosynthesis via DXP pathway; isopentenyl diphosphate from 1-deoxy-D-xylulose 5-phosphate: step 6/6. Catalyzes the conversion of 1-hydroxy-2-methyl-2-(E)-butenyl 4-diphosphate (HMBPP) into a mixture of isopentenyl diphosphate (IPP) and dimethylallyl diphosphate (DMAPP). Acts in the terminal step of the DOXP/MEP pathway for isoprenoid precursor biosynthesis. This Francisella philomiragia subsp. philomiragia (strain ATCC 25017 / CCUG 19701 / FSC 153 / O#319-036) protein is 4-hydroxy-3-methylbut-2-enyl diphosphate reductase.